A 157-amino-acid polypeptide reads, in one-letter code: Arginine regulator (157 aa).

It belongs to the ArgR family.

It localises to the cytoplasm. The protein operates within amino-acid degradation; L-arginine degradation via ADI pathway. Regulates the transcription of the arc operon, involved in arginine catabolism. This is Arginine regulator (argR1) from Streptococcus pyogenes serotype M3 (strain ATCC BAA-595 / MGAS315).